The sequence spans 263 residues: Small ribosomal subunit protein eS4 (263 aa).

An S4 RNA-binding domain is found at 42–104 (LPLIIFLRNR…TGENFRLIYD (63 aa)).

Belongs to the eukaryotic ribosomal protein eS4 family.

The polypeptide is Small ribosomal subunit protein eS4 (RPS4) (Cricetulus griseus (Chinese hamster)).